Reading from the N-terminus, the 819-residue chain is Protein O-mannosyl-transferase tmem260 (819 aa).

Positions 1 to 10 are enriched in polar residues; sequence MNNSPTLSNT. The segment at 1–68 is disordered; it reads MNNSPTLSNT…NNNNNIINVN (68 aa). Low complexity predominate over residues 15–68; it reads NNNNNSNSNSNSNNNNNNNNNNNNNSNNNNNNNNNVNRNVNNRNNNNNNIINVN. N-linked (GlcNAc...) asparagine glycosylation is found at asparagine 18, asparagine 38, and asparagine 70. A run of 7 helical transmembrane segments spans residues 113-133, 152-172, 185-205, 210-230, 232-252, 285-305, and 316-336; these read IACI…TQYP, VAHP…SHII, FMSS…VYLW, WCGL…MYQI, GEVF…GVWY, LTNQ…LMFI, and ILSN…LLFI. Asparagine 349 carries N-linked (GlcNAc...) asparagine glycosylation. A run of 4 helical transmembrane segments spans residues 391 to 411, 427 to 447, 459 to 479, and 505 to 525; these read LIIQ…LNLL, MIIF…NLPI, FFMQ…KSIF, and YLLP…NYNL. N-linked (GlcNAc...) asparagine glycans are attached at residues asparagine 531, asparagine 686, asparagine 693, and asparagine 783.

It belongs to the glycosyltransferase 117 (GT117) family.

Its subcellular location is the endoplasmic reticulum membrane. It carries out the reaction a di-trans,poly-cis-dolichyl beta-D-mannosyl phosphate + L-seryl-[protein] = 3-O-(alpha-D-mannosyl)-L-seryl-[protein] + a di-trans,poly-cis-dolichyl phosphate + H(+). The catalysed reaction is a di-trans,poly-cis-dolichyl beta-D-mannosyl phosphate + L-threonyl-[protein] = 3-O-(alpha-D-mannosyl)-L-threonyl-[protein] + a di-trans,poly-cis-dolichyl phosphate + H(+). In terms of biological role, O-mannosyl-transferase that transfers mannosyl residues to the hydroxyl group of serine or threonine residues of proteins. The protein is Protein O-mannosyl-transferase tmem260 of Dictyostelium discoideum (Social amoeba).